The following is an 86-amino-acid chain: uncharacterized protein (86 aa).

4Fe-4S ferredoxin-type domains are found at residues 1-29 and 31-65; these read MALL…IGDE and YVID…PDPE. [4Fe-4S] cluster-binding residues include C9, C12, C15, C19, C38, C41, C50, and C54.

It depends on [4Fe-4S] cluster as a cofactor.

This is an uncharacterized protein from Haemophilus influenzae (strain ATCC 51907 / DSM 11121 / KW20 / Rd).